Reading from the N-terminus, the 93-residue chain is Transcription factor RADIALIS (93 aa).

The region spanning glycine 6–lysine 61 is the SANT domain.

Specifically expressed in the dorsal region of developing flowers.

It localises to the nucleus. Functionally, involved in the dorsovental asymmetry of flowers. Promotes dorsal identity. The protein is Transcription factor RADIALIS (RAD) of Antirrhinum majus (Garden snapdragon).